The sequence spans 705 residues: Fatty acid oxidation complex subunit alpha (705 aa).

The segment at 1-188 (MGKTFNLTRR…KMGLVNDVVP (188 aa)) is enoyl-CoA hydratase. Positions 308–705 (RKVKKAVILG…AMAAEKARFF (398 aa)) are 3-hydroxyacyl-CoA dehydrogenase.

In the N-terminal section; belongs to the enoyl-CoA hydratase/isomerase family. This sequence in the central section; belongs to the 3-hydroxyacyl-CoA dehydrogenase family. Heterotetramer of two alpha chains (FadJ) and two beta chains (FadI).

Its subcellular location is the cytoplasm. It carries out the reaction a (3S)-3-hydroxyacyl-CoA = a (2E)-enoyl-CoA + H2O. It catalyses the reaction a 4-saturated-(3S)-3-hydroxyacyl-CoA = a (3E)-enoyl-CoA + H2O. The enzyme catalyses a (3S)-3-hydroxyacyl-CoA + NAD(+) = a 3-oxoacyl-CoA + NADH + H(+). The catalysed reaction is (3S)-3-hydroxybutanoyl-CoA = (3R)-3-hydroxybutanoyl-CoA. Its pathway is lipid metabolism; fatty acid beta-oxidation. Functionally, catalyzes the formation of a hydroxyacyl-CoA by addition of water on enoyl-CoA. Also exhibits 3-hydroxyacyl-CoA epimerase and 3-hydroxyacyl-CoA dehydrogenase activities. This is Fatty acid oxidation complex subunit alpha from Shewanella oneidensis (strain ATCC 700550 / JCM 31522 / CIP 106686 / LMG 19005 / NCIMB 14063 / MR-1).